Consider the following 553-residue polypeptide: MTKYVFVTGGVVSSLGKGIAAASLAAILESRGLKVTLLKLDPYINVDPGTMSPLQHGEVFVTEDGAETDLDLGHYERFVSAKMRKSNNFTTGQIYESVISKERRGEYLGKTVQVIPHITNEIQAFVERGAKASHDGKADVAICEIGGTVGDIESLPFLEAARQMSLRLPLHSCAFVHLTLVPFISSAGELKTKPTQHSVQKLREIGIMPTVLLCRADRPIPNDERAKISLFSNVREEAVISVWDVDTIYKIPEMLQAQGMDDLICRELELNAKPADLSVWANLVYELANPKHEVTIGMVGKYVELTESYKSLIEALRHAGIHTHTRVNITYIDSEDIEKEGIDCLKDLDAILVPGGFGKRGTEGKIAAIRYARENQVPYLGICLGMQLAVIEFARHVANIVQANSTEFDADTESPVVALITEWLDREGRVEKRTNASDLGGTMRLGSQRCPVKPGTLAHRIYGAEVNERHRHRYEVNNTYVPKLEQSGLVISARTPNEMLPEMMELPDSMHPWFFGVQFHPEFTSTPRDGHPLFSAFIKAALIHQDATLKQVS.

The interval 1-270 is amidoligase domain; sequence MTKYVFVTGG…DDLICRELEL (270 aa). S13 is a CTP binding site. S13 is a UTP binding site. Residues 14-19 and D71 contribute to the ATP site; that span reads SLGKGI. D71 and E144 together coordinate Mg(2+). Residues 151 to 153, 191 to 196, and K227 contribute to the CTP site; these read DIE and KTKPTQ. UTP is bound by residues 191–196 and K227; that span reads KTKPTQ. One can recognise a Glutamine amidotransferase type-1 domain in the interval 295 to 547; sequence TIGMVGKYVE…IKAALIHQDA (253 aa). G356 provides a ligand contact to L-glutamine. C383 acts as the Nucleophile; for glutamine hydrolysis in catalysis. Residues 384 to 387, E407, and R473 each bind L-glutamine; that span reads LGMQ. Residues H520 and E522 contribute to the active site.

This sequence belongs to the CTP synthase family. Homotetramer.

It catalyses the reaction UTP + L-glutamine + ATP + H2O = CTP + L-glutamate + ADP + phosphate + 2 H(+). It carries out the reaction L-glutamine + H2O = L-glutamate + NH4(+). The catalysed reaction is UTP + NH4(+) + ATP = CTP + ADP + phosphate + 2 H(+). The protein operates within pyrimidine metabolism; CTP biosynthesis via de novo pathway; CTP from UDP: step 2/2. With respect to regulation, allosterically activated by GTP, when glutamine is the substrate; GTP has no effect on the reaction when ammonia is the substrate. The allosteric effector GTP functions by stabilizing the protein conformation that binds the tetrahedral intermediate(s) formed during glutamine hydrolysis. Inhibited by the product CTP, via allosteric rather than competitive inhibition. In terms of biological role, catalyzes the ATP-dependent amination of UTP to CTP with either L-glutamine or ammonia as the source of nitrogen. Regulates intracellular CTP levels through interactions with the four ribonucleotide triphosphates. The protein is CTP synthase of Polynucleobacter asymbioticus (strain DSM 18221 / CIP 109841 / QLW-P1DMWA-1) (Polynucleobacter necessarius subsp. asymbioticus).